A 185-amino-acid chain; its full sequence is Ribosome-recycling factor (185 aa).

The protein belongs to the RRF family.

It localises to the cytoplasm. In terms of biological role, responsible for the release of ribosomes from messenger RNA at the termination of protein biosynthesis. May increase the efficiency of translation by recycling ribosomes from one round of translation to another. In Frankia alni (strain DSM 45986 / CECT 9034 / ACN14a), this protein is Ribosome-recycling factor.